Here is a 1355-residue protein sequence, read N- to C-terminus: MTNEKMIFRNRVVDKGQLRNLISWAFTHYGTARTAVMADKLKDLGFRYATRAGVSISVDDLMVPPSKRSLLEAAEEEIRATEVRYQRGEITEVERFQKVIDTWNGTSEALKDEVVTHFKQTNPLNSVYMMAFSGARGNISQVRQLVGMRGLMADPQGEIIDLPIKTNFREGLTVTEYIISSYGARKGLVDTALRTADSGYLTRRLVDVSQDVIIREIDCGTTRGIPVRPMTEGSKTLIKLSTRLLGRVVGEDVIHPKTKEVIAPRNTPISDDLAKEIEKAGVAEVVVRSPLTCEAARSVCQHCYGWSLAHAKMVDLGEAVGIIAAQSIGEPGTQLTMRTFHTGGVFTGEVAQQVRSKMDGTIKLPRKLRTRTHRTRHGEDALFVESNGIMILEPRKEGSETPAPQEIHVTQGSTIYIVDGQQVKKGQLLAEVALGGRTTRTNTEKAVKDVASDLAGEVKFAEVVPEQKTDRQGNTTTTAARGGLIWILSGEVYNLPPGAELVVKNGDRVETNGVLAETKLTTIHGGVVRLPEATPGKSTREIEIITASVVLDQATVTVQSSQGRNNYLITTGNNQVFNLRATPGTKVQNGQVVAELIDDRYRTTTGGFLKFAGVEVQKKGKAKLGYEVVQGGTLLWIPEETHEVNKDISLLLVEDGQYVEAGTEVVKDIFCQNSGVVEVTQKNDILREVVVKPGELLMVDDPEAVIGRDNTLLQPGEELLGQVATELRYIQYVESPEGPALLSRPVVEFAVPSNPDVPSTTSVSQQTGRSIQMRAVQRLPYKDSERVKSVEGVELLRTQLVLEIEQEGEQEHNASPLAADIELIPDLEDADVQRLQLVILESLVLRRDIAADATQGSTQTSLEVKDGDTIVPGSVVARTQILSKEGGIVRGVQKGSEAVRRCLVLRHSDMATLNISAKPKVKAGDLIVAGTELAPGIFAEESGQIVGVKNAGESTTTQDAALSTQNYAVTIRAGRPYRVSPGAVLQIEDGDLVQRGDNLVLLVFERAKTGDIIQGLPRIEELLEARKPKEACILAKRGGEVKVVYGDGDEAIAIKVIESNGVVTDYPLGPGQNLAMPDGSVVPAGQPLSDGPSNPHEILEVFFSLGSEDGVYACASHALQKVQTFLVNEVQMVYQSQGIDIADKHIEVIVRQMTNKVRIDDGGDTTMLPGELVELRQVEQVNEAMAITGGARAQYTPVLLGITKASLNTDSFISAASFQETTRVLTEAAIEGKSDWLRGLKENVIIGRLIPAGTGYNTYDEPGMLEDYSTLETTSVLDETDDPLDMVLDDRTARAYNLDSPGLAETGFNNRRSILDDDELIADEIHDLVEAEVEVDDEVDDDYEDDDEDDDDYED.

Cysteine 219, cysteine 293, cysteine 300, and cysteine 303 together coordinate Zn(2+). Residues 1331–1355 (AEVEVDDEVDDDYEDDDEDDDDYED) are disordered.

It belongs to the RNA polymerase beta' chain family. RpoC2 subfamily. In cyanobacteria the RNAP catalytic core is composed of 2 alpha, 1 beta, 1 beta', 1 gamma and 1 omega subunit. When a sigma factor is associated with the core the holoenzyme is formed, which can initiate transcription. The cofactor is Zn(2+).

The enzyme catalyses RNA(n) + a ribonucleoside 5'-triphosphate = RNA(n+1) + diphosphate. DNA-dependent RNA polymerase catalyzes the transcription of DNA into RNA using the four ribonucleoside triphosphates as substrates. The protein is DNA-directed RNA polymerase subunit beta' of Nostoc sp. (strain PCC 7120 / SAG 25.82 / UTEX 2576).